The following is a 148-amino-acid chain: MKKVLVLHGINLNMFGKRDPAHYGTTTLKEIDARISEWAAELGFEVECFQTNHEGEMASRIHAAHEENVDAVVINAGAWTHYSYGIADALAILKAPIVEVHMSNIHAREEFRHHSVIAGLAKGQICGFGVDSYHLGLIAASNLIKVEN.

Residue Tyr-23 is the Proton acceptor of the active site. Substrate is bound by residues Asn-75, His-81, and Asp-88. The Proton donor role is filled by His-101. Residues 102–103 (MS) and Arg-112 each bind substrate.

The protein belongs to the type-II 3-dehydroquinase family. In terms of assembly, homododecamer.

It catalyses the reaction 3-dehydroquinate = 3-dehydroshikimate + H2O. The protein operates within metabolic intermediate biosynthesis; chorismate biosynthesis; chorismate from D-erythrose 4-phosphate and phosphoenolpyruvate: step 3/7. In terms of biological role, catalyzes a trans-dehydration via an enolate intermediate. The polypeptide is 3-dehydroquinate dehydratase (Syntrophotalea carbinolica (strain DSM 2380 / NBRC 103641 / GraBd1) (Pelobacter carbinolicus)).